The chain runs to 934 residues: Complement component C6 (934 aa).

Residues 1–21 form the signal peptide; it reads MARRSVLYFILLNALINKGQA. Cystine bridges form between C22–C61, C24–C65, C35–C73, C39–C78, C82–C117, C93–C127, C96–C133, C140–C151, C146–C164, C158–C173, and C180–C218. 2 TSP type-1 domains span residues 22 to 79 and 81 to 134; these read CFCD…QRCP and NCLL…KLCK. W29 carries a C-linked (Man) tryptophan glycan. W32 carries C-linked (Man) tryptophan; partial glycosylation. The O-linked (Fuc...) threonine glycan is linked to T38. A C-linked (Man) tryptophan; partial glycan is attached at W90. One can recognise an LDL-receptor class A domain in the interval 138-175; sequence ADCKNKFRCDSGRCIARKLECNGENDCGDNSDERDCGR. Ca(2+) is bound by residues L156, N159, E161, D163, D169, and E170. An MACPF domain is found at 176–522; that stretch reads TKAVCTRKYN…EYAAKFDPCQ (347 aa). Residues 278–290 form a beta stranded membrane-spanning segment; it reads SFSVPIFYSSKRS. N324 carries N-linked (GlcNAc...) asparagine glycosylation. An O-linked (Fuc...) threonine glycan is attached at T392. 16 disulfide bridges follow: C399/C420, C499/C623, C521/C570, C523/C539, C526/C541, C543/C552, C577/C611, C589/C601, C644/C686, C672/C699, C704/C746, C732/C761, C773/C823, C784/C801, C786/C837, and C793/C816. A beta stranded transmembrane segment spans residues 402-415; that stretch reads IETKKRVLFAKKTK. Residues 523 to 553 form the EGF-like domain; it reads CAPCPNNGRPTLSGTECLCVCQSGTYGENCE. Residues 565 to 612 enclose the TSP type-1 3 domain; the sequence is DGQWGCWSSWSTCDATYKRSRTRECNNPAPQRGGKRCEGEKRQEEDCT. Residues W568, W571, and W574 are each glycosylated (C-linked (Man) tryptophan; partial). CCP stretches follow at residues 611–688 and 689–765; these read CTFS…RCLP and DGTW…EKDT. 2 Sushi domains span residues 642–701 and 702–763; these read SGCP…ECQR and TECI…TCEK. Residues 642-934 are C5b-binding domain; the sequence is SGCPQPVPPE…EILHPGKCLA (293 aa). Positions 766–840 are factor I module (FIM) 1; the sequence is LTKLKGHCQL…FLHIGSCQDG (75 aa). The Kazal-like 1 domain occupies 780 to 839; that stretch reads SGSECICMSPEEDCSHHSEDLCVFDTDSNDYFTSPACKFLAEKCLNNQQLHFLHIGSCQD. A glycan (N-linked (GlcNAc...) asparagine) is linked at N855. A factor I module (FIM) 2 region spans residues 858 to 934; that stretch reads KKESCGYDTC…EILHPGKCLA (77 aa). Intrachain disulfides connect C862–C873, C867–C919, C880–C897, C882–C932, and C888–C912. One can recognise a Kazal-like 2 domain in the interval 876–934; it reads STSKCVCLLPPQCFKGGNQLYCVKMGSSTSEKTLNICEVGTIRCANRKMEILHPGKCLA.

The protein belongs to the complement C6/C7/C8/C9 family. Component of the membrane attack complex (MAC), composed of complement C5b, C6, C7, C8A, C8B, C8G and multiple copies of the pore-forming subunit C9. Post-translationally, all cysteine residues are assumed to be cross-linked to one another. Individual modules containing an even number of conserved cysteine residues are supposed to have disulfide linkages only within the same module.

The protein localises to the secreted. It is found in the target cell membrane. Its activity is regulated as follows. Membrane attack complex (MAC) assembly is inhibited by CD59, thereby protecting self-cells from damage during complement activation. MAC assembly is also inhibited by clusterin (CLU) chaperones that inhibit polymerization of C9. Functionally, component of the membrane attack complex (MAC), a multiprotein complex activated by the complement cascade, which inserts into a target cell membrane and forms a pore, leading to target cell membrane rupture and cell lysis. The MAC is initiated by proteolytic cleavage of C5 into complement C5b in response to the classical, alternative, lectin and GZMK complement pathways. The complement pathways consist in a cascade of proteins that leads to phagocytosis and breakdown of pathogens and signaling that strengthens the adaptive immune system. Together with component C5b, involved in MAC complex assembly: complement C5b and C6 associate with the outer leaflet of target cell membrane, reducing the energy for membrane bending. The protein is Complement component C6 of Homo sapiens (Human).